Reading from the N-terminus, the 213-residue chain is Probable RNA 2'-phosphotransferase (213 aa).

It belongs to the KptA/TPT1 family.

In terms of biological role, removes the 2'-phosphate from RNA via an intermediate in which the phosphate is ADP-ribosylated by NAD followed by a presumed transesterification to release the RNA and generate ADP-ribose 1''-2''-cyclic phosphate (APPR&gt;P). May function as an ADP-ribosylase. This Pyrobaculum aerophilum (strain ATCC 51768 / DSM 7523 / JCM 9630 / CIP 104966 / NBRC 100827 / IM2) protein is Probable RNA 2'-phosphotransferase.